The sequence spans 254 residues: Glucosamine-6-phosphate deaminase (254 aa).

Residue Asp-67 is the Proton acceptor; for enolization step of the active site. Asn-136 functions as the For ring-opening step in the catalytic mechanism. His-138 (proton acceptor; for ring-opening step) is an active-site residue. Glu-143 acts as the For ring-opening step in catalysis.

It belongs to the glucosamine/galactosamine-6-phosphate isomerase family. NagB subfamily.

It catalyses the reaction alpha-D-glucosamine 6-phosphate + H2O = beta-D-fructose 6-phosphate + NH4(+). The protein operates within amino-sugar metabolism; N-acetylneuraminate degradation; D-fructose 6-phosphate from N-acetylneuraminate: step 5/5. Its function is as follows. Catalyzes the reversible isomerization-deamination of glucosamine 6-phosphate (GlcN6P) to form fructose 6-phosphate (Fru6P) and ammonium ion. In Brevibacillus brevis (strain 47 / JCM 6285 / NBRC 100599), this protein is Glucosamine-6-phosphate deaminase.